We begin with the raw amino-acid sequence, 261 residues long: MTRQTHAYHMVNPSPWPLTGALSALLMTSGLIMWFHFNSTILLMLGLTTNMLTMYQWWRDVIRESTFQGHHTPNVQKGLRYGMILFIISEVLFFTGFFWAFYHSSLAPTPELGGCWPPTGIHPLNPLEVPLLNTSVLLASGVSITWAHHSLMEGNRNHMLQALFITIALGVYFTLLQASEYYEAPFTISDGVYGSTFFVATGFHGLHVIIGSTFLIVCFFRQLKFHFTSNHHFGFEAAAWYWHFVDVVWLFLYVSIYWWGS.

Over 1–15 (MTRQTHAYHMVNPSP) the chain is Mitochondrial matrix. Residues 16 to 34 (WPLTGALSALLMTSGLIMW) form a helical membrane-spanning segment. Topologically, residues 35-40 (FHFNST) are mitochondrial intermembrane. The chain crosses the membrane as a helical span at residues 41 to 66 (ILLMLGLTTNMLTMYQWWRDVIREST). Over 67–72 (FQGHHT) the chain is Mitochondrial matrix. A helical membrane pass occupies residues 73–105 (PNVQKGLRYGMILFIISEVLFFTGFFWAFYHSS). The Mitochondrial intermembrane portion of the chain corresponds to 106–128 (LAPTPELGGCWPPTGIHPLNPLE). Residues 129 to 152 (VPLLNTSVLLASGVSITWAHHSLM) traverse the membrane as a helical segment. Residues 153-155 (EGN) are Mitochondrial matrix-facing. A helical membrane pass occupies residues 156–183 (RNHMLQALFITIALGVYFTLLQASEYYE). Topologically, residues 184-190 (APFTISD) are mitochondrial intermembrane. A helical membrane pass occupies residues 191-223 (GVYGSTFFVATGFHGLHVIIGSTFLIVCFFRQL). At 224–232 (KFHFTSNHH) the chain is on the mitochondrial matrix side. Residues 233–256 (FGFEAAAWYWHFVDVVWLFLYVSI) traverse the membrane as a helical segment. The Mitochondrial intermembrane portion of the chain corresponds to 257–261 (YWWGS).

The protein belongs to the cytochrome c oxidase subunit 3 family. In terms of assembly, component of the cytochrome c oxidase (complex IV, CIV), a multisubunit enzyme composed of 14 subunits. The complex is composed of a catalytic core of 3 subunits MT-CO1, MT-CO2 and MT-CO3, encoded in the mitochondrial DNA, and 11 supernumerary subunits COX4I, COX5A, COX5B, COX6A, COX6B, COX6C, COX7A, COX7B, COX7C, COX8 and NDUFA4, which are encoded in the nuclear genome. The complex exists as a monomer or a dimer and forms supercomplexes (SCs) in the inner mitochondrial membrane with NADH-ubiquinone oxidoreductase (complex I, CI) and ubiquinol-cytochrome c oxidoreductase (cytochrome b-c1 complex, complex III, CIII), resulting in different assemblies (supercomplex SCI(1)III(2)IV(1) and megacomplex MCI(2)III(2)IV(2)).

The protein localises to the mitochondrion inner membrane. The catalysed reaction is 4 Fe(II)-[cytochrome c] + O2 + 8 H(+)(in) = 4 Fe(III)-[cytochrome c] + 2 H2O + 4 H(+)(out). Functionally, component of the cytochrome c oxidase, the last enzyme in the mitochondrial electron transport chain which drives oxidative phosphorylation. The respiratory chain contains 3 multisubunit complexes succinate dehydrogenase (complex II, CII), ubiquinol-cytochrome c oxidoreductase (cytochrome b-c1 complex, complex III, CIII) and cytochrome c oxidase (complex IV, CIV), that cooperate to transfer electrons derived from NADH and succinate to molecular oxygen, creating an electrochemical gradient over the inner membrane that drives transmembrane transport and the ATP synthase. Cytochrome c oxidase is the component of the respiratory chain that catalyzes the reduction of oxygen to water. Electrons originating from reduced cytochrome c in the intermembrane space (IMS) are transferred via the dinuclear copper A center (CU(A)) of subunit 2 and heme A of subunit 1 to the active site in subunit 1, a binuclear center (BNC) formed by heme A3 and copper B (CU(B)). The BNC reduces molecular oxygen to 2 water molecules using 4 electrons from cytochrome c in the IMS and 4 protons from the mitochondrial matrix. The chain is Cytochrome c oxidase subunit 3 (MT-CO3) from Eudorcas rufifrons (Red-fronted gazelle).